Reading from the N-terminus, the 330-residue chain is Daunorubicin/doxorubicin resistance ATP-binding protein DrrA (330 aa).

An ABC transporter domain is found at 9-239 (IETSGLVKVY…LGSNVLRLRL (231 aa)). An ATP-binding site is contributed by 41–48 (GPNGAGKS).

Belongs to the ABC transporter superfamily. Drug exporter-1 (DrugE1) (TC 3.A.1.105) family. In terms of assembly, the complex is composed of two ATP-binding proteins (DrrA) and two transmembrane proteins (DrrB).

It localises to the cell membrane. It catalyses the reaction daunorubicin(in) + ATP + H2O = daunorubicin(out) + ADP + phosphate + H(+). Part of the ABC transporter complex DrrAB involved in daunorubicin and doxorubicin resistance. Responsible for energy coupling to the transport system. Binds ATP or GTP. This chain is Daunorubicin/doxorubicin resistance ATP-binding protein DrrA (drrA), found in Streptomyces peucetius.